A 263-amino-acid chain; its full sequence is Receptor expression-enhancing protein 3-A (263 aa).

Helical transmembrane passes span 2-22 and 35-55; these read VSWIICKAVVLVFGMLYPAYF and YVRWMMYWIVFALYTVTEAIA. 2 disordered regions span residues 161 to 228 and 240 to 263; these read GDET…SMRS and YASLKHKPKKRPQLYFREDTAHHL. Residues 199 to 214 are compositionally biased toward acidic residues; sequence DDNTDEDVEVNSEDEV. The segment covering 242-251 has biased composition (basic residues); that stretch reads SLKHKPKKRP.

Belongs to the DP1 family.

The protein resides in the endoplasmic reticulum membrane. Its function is as follows. Microtubule-binding protein required to ensure proper cell division and nuclear envelope reassembly by sequestering the endoplasmic reticulum away from chromosomes during mitosis. Probably acts by clearing the endoplasmic reticulum membrane from metaphase chromosomes. In Xenopus laevis (African clawed frog), this protein is Receptor expression-enhancing protein 3-A (reep3-a).